A 429-amino-acid polypeptide reads, in one-letter code: Enolase (429 aa).

A (2R)-2-phosphoglycerate-binding site is contributed by Q163. Catalysis depends on E205, which acts as the Proton donor. Mg(2+)-binding residues include D242, E286, and D313. The (2R)-2-phosphoglycerate site is built by K338, R367, S368, and K389. The active-site Proton acceptor is K338.

Belongs to the enolase family. Requires Mg(2+) as cofactor.

It localises to the cytoplasm. It is found in the secreted. The protein resides in the cell surface. The enzyme catalyses (2R)-2-phosphoglycerate = phosphoenolpyruvate + H2O. Its pathway is carbohydrate degradation; glycolysis; pyruvate from D-glyceraldehyde 3-phosphate: step 4/5. Catalyzes the reversible conversion of 2-phosphoglycerate (2-PG) into phosphoenolpyruvate (PEP). It is essential for the degradation of carbohydrates via glycolysis. The polypeptide is Enolase (Thermoanaerobacter sp. (strain X514)).